The following is a 349-amino-acid chain: Anthranilate phosphoribosyltransferase (349 aa).

5-phospho-alpha-D-ribose 1-diphosphate-binding positions include Gly-82, 85–86 (GD), 92–95 (NVST), 110–118 (KHGNRGVSS), and Ser-122. Gly-82 serves as a coordination point for anthranilate. Ser-94 provides a ligand contact to Mg(2+). Position 113 (Asn-113) interacts with anthranilate. Arg-168 serves as a coordination point for anthranilate. Asp-227 and Glu-228 together coordinate Mg(2+).

It belongs to the anthranilate phosphoribosyltransferase family. Homodimer. Mg(2+) is required as a cofactor.

It catalyses the reaction N-(5-phospho-beta-D-ribosyl)anthranilate + diphosphate = 5-phospho-alpha-D-ribose 1-diphosphate + anthranilate. It functions in the pathway amino-acid biosynthesis; L-tryptophan biosynthesis; L-tryptophan from chorismate: step 2/5. Its function is as follows. Catalyzes the transfer of the phosphoribosyl group of 5-phosphorylribose-1-pyrophosphate (PRPP) to anthranilate to yield N-(5'-phosphoribosyl)-anthranilate (PRA). The chain is Anthranilate phosphoribosyltransferase from Acinetobacter baylyi (strain ATCC 33305 / BD413 / ADP1).